A 487-amino-acid polypeptide reads, in one-letter code: Serine/threonine-protein kinase 4 (487 aa).

At Met-1 the chain carries N-acetylmethionine. Residue Thr-3 is modified to Phosphothreonine. Residues 30–281 form the Protein kinase domain; sequence FDVLEKLGEG…ATQLLQHPFV (252 aa). ATP contacts are provided by residues 36–44 and Lys-59; that span reads LGEGSYGSV. Asp-149 acts as the Proton acceptor in catalysis. A Phosphothreonine; by autocatalysis modification is found at Thr-183. At Ser-265 the chain carries Phosphoserine. Residues 290–310 are a coiled coil; that stretch reads LRDLINEAMDVKLKRQESQQR. The segment covering 303-312 has biased composition (basic and acidic residues); sequence KRQESQQREV. Residues 303–332 are disordered; that stretch reads KRQESQQREVDQDDEENSEEDEMDSGTMVR. Acidic residues predominate over residues 313-326; it reads DQDDEENSEEDEMD. Ser-320 bears the Phosphoserine mark. Phosphothreonine occurs at positions 340 and 367. The residue at position 387 (Thr-387) is a Phosphothreonine; by PKB/AKT1. Residues Ser-410 and Ser-414 each carry the phosphoserine modification. Position 433 is a phosphotyrosine (Tyr-433). Positions 433 to 480 constitute an SARAH domain; sequence YEFLKSWTVEDLQKRLLALDPMMEQEIEEIRQKYQSKRQPILDAIEAK.

It belongs to the protein kinase superfamily. STE Ser/Thr protein kinase family. STE20 subfamily. As to quaternary structure, homodimer; mediated via the coiled-coil region. Interacts with NORE1, which inhibits autoactivation. Interacts with and stabilizes SAV1. Interacts with RASSF1. Interacts with FOXO3. Interacts with RASSF2 (via SARAH domain). Interacts with AR, PKB/AKT1, TNNI3 and SIRT1. Interacts with DLG5 (via PDZ domain 3). Interacts with MARK3 and SCRIB in the presence of DLG5. Requires Mg(2+) as cofactor. Post-translationally, autophosphorylated on serine and threonine residues. Phosphorylation at Thr-387 by PKB/AKT1, leads to inhibition of its: kinase activity, nuclear translocation and autophosphorylation at Thr-183. It also diminishes its cleavage by caspases and its ability to phosphorylate FOXO3. Proteolytically cleaved by caspase-3 during apoptosis at Asp-326 and Asp-349 resulting in a 37 kDa or a 39 kDa subunit respectively. The 39 kDa subunit is further cleaved into the 37 kDa form. Proteolytic cleavage results in kinase activation and nuclear translocation of the truncated form (MST1/N). It is less likely that cleavage at Asp-349 is a prerequisite for activation as this site is not conserved in the murine ortholog.

The protein localises to the cytoplasm. It is found in the nucleus. It catalyses the reaction L-seryl-[protein] + ATP = O-phospho-L-seryl-[protein] + ADP + H(+). The enzyme catalyses L-threonyl-[protein] + ATP = O-phospho-L-threonyl-[protein] + ADP + H(+). With respect to regulation, inhibited by the C-terminal non-catalytic region. Activated by caspase-cleavage. Full activation also requires homodimerization and autophosphorylation of Thr-183. Activated by RASSF1 which acts by preventing its dephosphorylation. Stress-activated, pro-apoptotic kinase which, following caspase-cleavage, enters the nucleus and induces chromatin condensation followed by internucleosomal DNA fragmentation. Key component of the Hippo signaling pathway which plays a pivotal role in organ size control and tumor suppression by restricting proliferation and promoting apoptosis. The core of this pathway is composed of a kinase cascade wherein STK3/MST2 and STK4/MST1, in complex with its regulatory protein SAV1, phosphorylates and activates LATS1/2 in complex with its regulatory protein MOB1, which in turn phosphorylates and inactivates YAP1 oncoprotein and WWTR1/TAZ. Phosphorylation of YAP1 by LATS2 inhibits its translocation into the nucleus to regulate cellular genes important for cell proliferation, cell death, and cell migration. STK3/MST2 and STK4/MST1 are required to repress proliferation of mature hepatocytes, to prevent activation of facultative adult liver stem cells (oval cells), and to inhibit tumor formation. Phosphorylates 'Ser-14' of histone H2B (H2BS14ph) during apoptosis. Phosphorylates FOXO3 upon oxidative stress, which results in its nuclear translocation and cell death initiation. Phosphorylates MOBKL1A, MOBKL1B and RASSF2. Phosphorylates TNNI3 (cardiac Tn-I) and alters its binding affinity to TNNC1 (cardiac Tn-C) and TNNT2 (cardiac Tn-T). Phosphorylates FOXO1 on 'Ser-212' and regulates its activation and stimulates transcription of PMAIP1 in a FOXO1-dependent manner. Phosphorylates SIRT1 and inhibits SIRT1-mediated p53/TP53 deacetylation, thereby promoting p53/TP53 dependent transcription and apoptosis upon DNA damage. Acts as an inhibitor of PKB/AKT1. Phosphorylates AR on 'Ser-650' and suppresses its activity by intersecting with PKB/AKT1 signaling and antagonizing formation of AR-chromatin complexes. The polypeptide is Serine/threonine-protein kinase 4 (STK4) (Papio anubis (Olive baboon)).